Consider the following 173-residue polypeptide: RNA pyrophosphohydrolase (173 aa).

The Nudix hydrolase domain occupies 6-149 (GFRANVGIIL…KRSVYRRALQ (144 aa)). The short motif at 38–59 (GGIDRGETPMDAMYRELWEEVG) is the Nudix box element.

This sequence belongs to the Nudix hydrolase family. RppH subfamily. The cofactor is a divalent metal cation.

In terms of biological role, accelerates the degradation of transcripts by removing pyrophosphate from the 5'-end of triphosphorylated RNA, leading to a more labile monophosphorylated state that can stimulate subsequent ribonuclease cleavage. This Psychrobacter cryohalolentis (strain ATCC BAA-1226 / DSM 17306 / VKM B-2378 / K5) protein is RNA pyrophosphohydrolase.